The following is a 439-amino-acid chain: Trigger factor (439 aa).

A PPIase FKBP-type domain is found at Gly-163–Pro-248.

It belongs to the FKBP-type PPIase family. Tig subfamily.

The protein localises to the cytoplasm. The catalysed reaction is [protein]-peptidylproline (omega=180) = [protein]-peptidylproline (omega=0). Functionally, involved in protein export. Acts as a chaperone by maintaining the newly synthesized protein in an open conformation. Functions as a peptidyl-prolyl cis-trans isomerase. The sequence is that of Trigger factor from Nitrosomonas europaea (strain ATCC 19718 / CIP 103999 / KCTC 2705 / NBRC 14298).